Here is a 224-residue protein sequence, read N- to C-terminus: Prothoracicotropic hormone (224 aa).

Positions 1-29 (MITRPIILVILCYAILMIVQSFVPKAVAL) are cleaved as a signal peptide. Intrachain disulfides connect C132/C169, C155/C211, and C163/C213. The N-linked (GlcNAc...) asparagine glycan is linked to N156.

In terms of assembly, homodimer; disulfide-linked. In terms of tissue distribution, PTTH is synthesized by two dorsolateral neurosecretory cells of the Bombyx brain.

Its function is as follows. PTTH is a brain secretory polypeptide of insects which stimulates the prothoracic glands to produce and release ecdysone, the steroid essential to insect development. Functionally, peptides P2K and P6K are presumed to be cleaved post-translationally and may play some unknown physiologically or developmentally important functions. This Bombyx mori (Silk moth) protein is Prothoracicotropic hormone.